Consider the following 272-residue polypeptide: Undecaprenyl-diphosphatase (272 aa).

The next 8 membrane-spanning stretches (helical) occupy residues 4-24 (FEVI…FLPI), 43-63 (GGRV…CWLY), 86-106 (ISVL…VDFI), 109-129 (VLFS…IIFW), 145-165 (ITFK…IPGT), 186-206 (TEFS…FDLI), 222-242 (VGFV…VLFV), and 249-269 (VFAW…MFFN).

This sequence belongs to the UppP family.

It localises to the cell inner membrane. It carries out the reaction di-trans,octa-cis-undecaprenyl diphosphate + H2O = di-trans,octa-cis-undecaprenyl phosphate + phosphate + H(+). Functionally, catalyzes the dephosphorylation of undecaprenyl diphosphate (UPP). Confers resistance to bacitracin. The sequence is that of Undecaprenyl-diphosphatase from Acinetobacter baumannii (strain AB307-0294).